The chain runs to 191 residues: Lipid A acyltransferase PagP (191 aa).

An N-terminal signal peptide occupies residues Met1–Ala23. Catalysis depends on residues His62, Asp105, and Ser106.

This sequence belongs to the lipid A palmitoyltransferase family. Homodimer.

It localises to the cell outer membrane. It carries out the reaction a lipid A + a 1,2-diacyl-sn-glycero-3-phosphocholine = a hepta-acyl lipid A + a 2-acyl-sn-glycero-3-phosphocholine. The catalysed reaction is a lipid IVA + a 1,2-diacyl-sn-glycero-3-phosphocholine = a lipid IVB + a 2-acyl-sn-glycero-3-phosphocholine. It catalyses the reaction a lipid IIA + a 1,2-diacyl-sn-glycero-3-phosphocholine = a lipid IIB + a 2-acyl-sn-glycero-3-phosphocholine. Its function is as follows. Transfers a fatty acid residue from the sn-1 position of a phospholipid to the N-linked hydroxyfatty acid chain on the proximal unit of lipid A or its precursors. In Sodalis glossinidius (strain morsitans), this protein is Lipid A acyltransferase PagP.